A 458-amino-acid polypeptide reads, in one-letter code: Monomethylamine methyltransferase MtmB2 (458 aa).

Position 202 (Pyl202) is a non-standard amino acid, pyrrolysine.

It belongs to the monomethylamine methyltransferase family. Can form a complex with MtmC (MtmC1 or MtmC2).

The catalysed reaction is Co(I)-[methylamine-specific corrinoid protein] + methylamine + H(+) = methyl-Co(III)-[methylamine-specific corrinoid protein] + NH4(+). It functions in the pathway one-carbon metabolism; methanogenesis from methylamine. In terms of biological role, catalyzes the transfer of the methyl group from monomethylamine to the corrinoid cofactor of MtmC (MtmC1 or MtmC2). This Methanosarcina barkeri protein is Monomethylamine methyltransferase MtmB2 (mtmB2).